Reading from the N-terminus, the 723-residue chain is MYKAVSKRVTRSSGSGLKQTNVDNGGEISPTVDRVSEQGKSSEAGSHMPTDANGNGHLHHEIMDHGKGNEEQKPTPQTVKKDSNTNTKFSGSHRELVIGLPCRGQFEIHNRSRASTSSKRLGGGGERNVLFASHKRAQRSKEDAGPSSVVANSTPVGRPKKKNKTMNKGQVREDDEYTRIKKKLRYFLNRINYEQSLIDAYSLEGWKGSSLEKIRPEKELERATKEILRRKLKIRDLFQHLDTLCAEGSLPESLFDTDGEISSEDIFCAKCGSKDLSVDNDIILCDGFCDRGFHQYCLEPPLRKEDIPPDDEGWLCPGCDCKDDSLDLLNDSLGTKFSVSDSWEKIFPEAAAALVGGGQNLDCDLPSDDSDDEEYDPDCLNDNENDEDGSDDNEESENEDGSSDETEFTSASDEMIESFKEGKDIMKDVMALPSDDSEDDDYDPDAPTCDDDKESSNSDCTSDTEDLETSFKGDETNQQAEDTPLEDPGRQTSQLQGDAILESDVGLDDGPAGVSRRRNVERLDYKKLYDEEYDNVPTSSSDDDDWDKTARMGKEDSESEDEGDTVPLKQSSNAEDHTSKKLIRKSKRADKKDTLEMPQEGPGENGGSGEIEKSSSSACKQTDPKTQRLYISFQENQYPDKATKESLAKELQMTVKQVNNWFKHRRWSINSKPLVSEENVEKLKTGKEGECETSVAGSSKQTMETESVAEKPTNTGSRKRRRK.

A compositionally biased stretch (basic residues) spans 1-10 (MYKAVSKRVT). Disordered stretches follow at residues 1–94 (MYKA…GSHR) and 135–173 (KRAQ…QVRE). Residues 11 to 23 (RSSGSGLKQTNVD) show a composition bias toward polar residues. The segment covering 58 to 83 (LHHEIMDHGKGNEEQKPTPQTVKKDS) has biased composition (basic and acidic residues). The PHD-type zinc-finger motif lies at 265–322 (DIFCAKCGSKDLSVDNDIILCDGFCDRGFHQYCLEPPLRKEDIPPDDEGWLCPGCDCK). Disordered regions lie at residues 357–628 (GGQN…KTQR) and 680–723 (VEKL…RRRK). Residues 365 to 407 (LPSDDSDDEEYDPDCLNDNENDEDGSDDNEESENEDGSSDETE) show a composition bias toward acidic residues. A compositionally biased stretch (basic and acidic residues) spans 417-427 (ESFKEGKDIMK). A compositionally biased stretch (acidic residues) spans 435–453 (DDSEDDDYDPDAPTCDDDK). Composition is skewed to basic and acidic residues over residues 518–530 (RNVE…KLYD) and 547–556 (DKTARMGKED). A compositionally biased stretch (basic residues) spans 580–589 (KKLIRKSKRA). A DNA-binding region (homeobox) is located at residues 614–673 (SSSSACKQTDPKTQRLYISFQENQYPDKATKESLAKELQMTVKQVNNWFKHRRWSINSKP). Basic and acidic residues predominate over residues 680-690 (VEKLKTGKEGE). Positions 695–705 (VAGSSKQTMET) are enriched in polar residues.

It belongs to the PHD-associated homeobox family. As to expression, primarily detected in root tissue.

It is found in the nucleus. Functionally, binds only to large DNA fragments. Recognizes a DNA fragment carrying 8 copies of box7 motif of the light-induced cab-E promoter of Nicotiana plumbaginifolia. Also recognizes the box7m1 motif. This is Homeobox protein HAT3.1 (HAT3.1) from Arabidopsis thaliana (Mouse-ear cress).